The primary structure comprises 364 residues: Thebaine 6-O-demethylase (364 aa).

A Fe2OG dioxygenase domain is found at glycine 214–proline 314. Tyrosine 223 contacts 2-oxoglutarate. Fe cation contacts are provided by histidine 238, aspartate 240, and histidine 295. The 2-oxoglutarate site is built by arginine 305 and serine 307.

It belongs to the iron/ascorbate-dependent oxidoreductase family. The cofactor is L-ascorbate. It depends on Fe cation as a cofactor. Mainly expressed in stems and leaves and, to a lower extent, in capsules and roots.

It catalyses the reaction thebaine + 2-oxoglutarate + O2 = neopinone + formaldehyde + succinate + CO2. The catalysed reaction is oripavine + 2-oxoglutarate + O2 = neomorphinone + formaldehyde + succinate + CO2. It carries out the reaction (S)-canadine + S-adenosyl-L-methionine = (S)-cis-N-methylcanadine + S-adenosyl-L-homocysteine. The enzyme catalyses thebaine + 2-oxoglutarate + O2 = 6-O-demethylthebaine + formaldehyde + succinate + CO2 + H(+). Its pathway is alkaloid biosynthesis; morphine biosynthesis. Its activity is regulated as follows. Moderate substrate inhibition. Not inhibited in vitro by acylcyclohexanediones. Functionally, non-heme dioxygenase involved in biosynthesis of morphinan-type benzylisoquinoline and opiate alkaloids natural products. Mediates the conversion of thebaine to neopinone. Also catalyzes, with lower efficiency, the 6-O-demethylation of oripavine to neomorphinone, which is converted spontaneously to morphinone. Supports dealkylation reactions such as O,O-demethylenation in the metabolism of protopine, benzo[c]phenanthridine, and rhoeadine alkaloids; cleaves a methylenedioxy bridge leaving two hydroxyl groups. Catalyzes the O-demethylation of methylenedioxy bridges on protopine alkaloids such as allocryptopine. No activity with (S)-reticuline, salutaridine, papaverine, (S)-corytuberine, (S)-scoulerine, pavine, noscapine or codeine. This is Thebaine 6-O-demethylase from Papaver somniferum (Opium poppy).